Consider the following 377-residue polypeptide: Pseudouridylate synthase RPUSD4, mitochondrial (377 aa).

A disordered region spans residues Leu-51–Gln-70. Asp-153 is a catalytic residue.

It belongs to the pseudouridine synthase RluA family. In terms of assembly, interacts with 16S mt-rRNA, mt-tRNA(Phe) and mt-tRNA(Met). Forms a regulatory protein-RNA complex, consisting of RCC1L, NGRN, RPUSD3, RPUSD4, TRUB2, FASTKD2 and 16S mt-rRNA.

It localises to the mitochondrion matrix. The protein localises to the nucleus. Its subcellular location is the cytoplasm. It carries out the reaction uridine in 5S rRNA = pseudouridine in 5S rRNA. The catalysed reaction is a uridine in tRNA = a pseudouridine in tRNA. It catalyses the reaction a uridine in mRNA = a pseudouridine in mRNA. Functionally, catalyzes uridine to pseudouridine isomerization (pseudouridylation) of different mitochondrial RNA substrates. Acts on position 1397 in 16S mitochondrial ribosomal RNA (16S mt-rRNA). This modification is required for the assembly of 16S mt-rRNA into a functional mitochondrial ribosome. As a component of a functional protein-RNA module, consisting of RCC1L, NGRN, RPUSD3, RPUSD4, TRUB2, FASTKD2 and 16S mt-rRNA, controls 16S mt-rRNA abundance and is required for intra-mitochondrial translation. Acts on position 39 in mitochondrial tRNA(Phe). Also catalyzes pseudouridylation of mRNAs in nucleus: acts as a regulator of pre-mRNA splicing by mediating pseudouridylation of pre-mRNAs at locations associated with alternatively spliced regions. Pseudouridylation of pre-mRNAs near splice sites directly regulates mRNA splicing and mRNA 3'-end processing. This Bos taurus (Bovine) protein is Pseudouridylate synthase RPUSD4, mitochondrial.